The following is a 148-amino-acid chain: MGQFIFVSFGFLVVATSLSGTEAGFCCPLGWSSYDEHCYQVFQQKMNWEDAEKFCTQQHKGSHLVSFHSSEEVDFVTSKTFPILKYDFVWIGLSNVWNECTKEWSDGTKLDYKAWSGGSDCIVSKTTDNQWLSMDCSSKRYVVCKFQA.

An N-terminal signal peptide occupies residues 1–23 (MGQFIFVSFGFLVVATSLSGTEA). 3 cysteine pairs are disulfide-bonded: cysteine 27–cysteine 38, cysteine 55–cysteine 144, and cysteine 121–cysteine 136. A C-type lectin domain is found at 34 to 145 (YDEHCYQVFQ…CSSKRYVVCK (112 aa)).

The protein belongs to the snaclec family. Tetramer of heterodimers of alpha and beta subunits (alphabeta)(4); disulfide-linked. In terms of tissue distribution, expressed by the venom gland.

Its subcellular location is the secreted. Its function is as follows. Strong platelet aggregation inhibitor. Binds specifically to platelet glycoprotein Ibalpha (GP1BA) with high affinity and inhibits vWF-dependent platelet aggregation. Has also been observed to induce small agglutinates in washed platelets by binding to GPIb. The protein is Snaclec flavocetin-A subunit beta of Protobothrops flavoviridis (Habu).